The primary structure comprises 224 residues: Putative ribonuclease Z (224 aa).

Asp-120 and His-184 together coordinate Zn(2+).

It belongs to the RNase Z family. As to quaternary structure, homodimer. Zn(2+) is required as a cofactor.

It catalyses the reaction Endonucleolytic cleavage of RNA, removing extra 3' nucleotides from tRNA precursor, generating 3' termini of tRNAs. A 3'-hydroxy group is left at the tRNA terminus and a 5'-phosphoryl group is left at the trailer molecule.. Its function is as follows. Zinc phosphodiesterase, which displays some tRNA 3'-processing endonuclease activity. Probably involved in tRNA maturation, by removing a 3'-trailer from precursor tRNA. This is Putative ribonuclease Z (rnz) from Mycobacterium tuberculosis (strain CDC 1551 / Oshkosh).